The following is a 354-amino-acid chain: Methylthioribose-1-phosphate isomerase (354 aa).

Residues 58 to 60, Arg101, and Gln204 each bind substrate; that span reads RGA. Asp245 functions as the Proton donor in the catalytic mechanism. Residue 255-256 participates in substrate binding; sequence NK.

The protein belongs to the eIF-2B alpha/beta/delta subunits family. MtnA subfamily.

The catalysed reaction is 5-(methylsulfanyl)-alpha-D-ribose 1-phosphate = 5-(methylsulfanyl)-D-ribulose 1-phosphate. Its pathway is amino-acid biosynthesis; L-methionine biosynthesis via salvage pathway; L-methionine from S-methyl-5-thio-alpha-D-ribose 1-phosphate: step 1/6. In terms of biological role, catalyzes the interconversion of methylthioribose-1-phosphate (MTR-1-P) into methylthioribulose-1-phosphate (MTRu-1-P). The chain is Methylthioribose-1-phosphate isomerase from Xanthomonas euvesicatoria pv. vesicatoria (strain 85-10) (Xanthomonas campestris pv. vesicatoria).